The chain runs to 515 residues: Sterol 14-alpha demethylase cyp51A (515 aa).

Residues 7–29 form a helical membrane-spanning segment; it reads LTAYMAVAVLTAILLNVVYQLFF. N-linked (GlcNAc...) asparagine glycosylation is found at asparagine 33 and asparagine 269. Residue cysteine 454 coordinates heme. The N-linked (GlcNAc...) asparagine glycan is linked to asparagine 512.

Belongs to the cytochrome P450 family. The cofactor is heme.

It is found in the endoplasmic reticulum membrane. The enzyme catalyses a 14alpha-methyl steroid + 3 reduced [NADPH--hemoprotein reductase] + 3 O2 = a Delta(14) steroid + formate + 3 oxidized [NADPH--hemoprotein reductase] + 4 H2O + 4 H(+). It catalyses the reaction a 14alpha-methyl steroid + reduced [NADPH--hemoprotein reductase] + O2 = a 14alpha-hydroxymethyl steroid + oxidized [NADPH--hemoprotein reductase] + H2O + H(+). The catalysed reaction is a 14alpha-hydroxymethyl steroid + reduced [NADPH--hemoprotein reductase] + O2 = a 14alpha-formyl steroid + oxidized [NADPH--hemoprotein reductase] + 2 H2O + H(+). It carries out the reaction a 14alpha-formyl steroid + reduced [NADPH--hemoprotein reductase] + O2 = a Delta(14) steroid + formate + oxidized [NADPH--hemoprotein reductase] + H2O + 2 H(+). The enzyme catalyses lanosterol + 3 reduced [NADPH--hemoprotein reductase] + 3 O2 = 4,4-dimethyl-5alpha-cholesta-8,14,24-trien-3beta-ol + formate + 3 oxidized [NADPH--hemoprotein reductase] + 4 H2O + 4 H(+). It catalyses the reaction lanosterol + reduced [NADPH--hemoprotein reductase] + O2 = 32-hydroxylanosterol + oxidized [NADPH--hemoprotein reductase] + H2O + H(+). The catalysed reaction is 32-hydroxylanosterol + reduced [NADPH--hemoprotein reductase] + O2 = 32-oxolanosterol + oxidized [NADPH--hemoprotein reductase] + 2 H2O + H(+). It carries out the reaction 32-oxolanosterol + reduced [NADPH--hemoprotein reductase] + O2 = 4,4-dimethyl-5alpha-cholesta-8,14,24-trien-3beta-ol + formate + oxidized [NADPH--hemoprotein reductase] + H2O + 2 H(+). The enzyme catalyses eburicol + 3 reduced [NADPH--hemoprotein reductase] + 3 O2 = 14-demethyleburicol + formate + 3 oxidized [NADPH--hemoprotein reductase] + 4 H2O + 4 H(+). It catalyses the reaction eburicol + reduced [NADPH--hemoprotein reductase] + O2 = 32-hydroxyeburicol + oxidized [NADPH--hemoprotein reductase] + H2O + H(+). The catalysed reaction is 32-hydroxyeburicol + reduced [NADPH--hemoprotein reductase] + O2 = 32-oxoeburicol + oxidized [NADPH--hemoprotein reductase] + 2 H2O + H(+). It carries out the reaction 32-oxoeburicol + reduced [NADPH--hemoprotein reductase] + O2 = 14-demethyleburicol + formate + oxidized [NADPH--hemoprotein reductase] + H2O + 2 H(+). It participates in steroid metabolism; ergosterol biosynthesis. Its activity is regulated as follows. The sterol 14-alpha demethylase activity is inhibited by azole compounds. Activity is inhibited by the novel and long-acting fungicidal azole, PC1244. Sterol 14alpha-demethylase, encoded by cyp51A and cyp51B, that plays a critical role in the third module of ergosterol biosynthesis pathway, being ergosterol the major sterol component in fungal membranes that participates in a variety of functions. The third module or late pathway involves the ergosterol synthesis itself through consecutive reactions that mainly occur in the endoplasmic reticulum (ER) membrane. In filamentous fungi, during the initial step of this module, lanosterol (lanosta-8,24-dien-3beta-ol) can be metabolized to eburicol. Sterol 14alpha-demethylase catalyzes the three-step oxidative removal of the 14alpha-methyl group (C-32) of both these sterols in the form of formate, and converts eburicol and lanosterol to 14-demethyleburicol (4,4,24-trimethylergosta-8,14,24(28)-trienol) and 4,4-dimethyl-5alpha-cholesta-8,14,24-trien-3beta-ol, respectively, which are further metabolized by other enzymes in the pathway to ergosterol. Can also use substrates not intrinsic to fungi, such as 24,25-dihydrolanosterol (DHL), producing 4,4'-dimethyl-8,14-cholestadien-3-beta-ol, but at lower rates than the endogenous substrates. Functionally, as a target of azole drugs, plays a crucial role in azole susceptibility. This Aspergillus fumigatus (strain ATCC MYA-4609 / CBS 101355 / FGSC A1100 / Af293) (Neosartorya fumigata) protein is Sterol 14-alpha demethylase cyp51A.